We begin with the raw amino-acid sequence, 152 residues long: Large ribosomal subunit protein bL9 (152 aa).

The protein belongs to the bacterial ribosomal protein bL9 family.

Functionally, binds to the 23S rRNA. This is Large ribosomal subunit protein bL9 from Coxiella burnetii (strain RSA 331 / Henzerling II).